Here is a 309-residue protein sequence, read N- to C-terminus: Aspartate carbamoyltransferase catalytic subunit (309 aa).

Carbamoyl phosphate-binding residues include Arg-54 and Thr-55. Residue Lys-82 participates in L-aspartate binding. Carbamoyl phosphate contacts are provided by Arg-104, His-132, and Gln-135. L-aspartate is bound by residues Arg-165 and Arg-219. Residues Gly-260 and Pro-261 each contribute to the carbamoyl phosphate site.

The protein belongs to the aspartate/ornithine carbamoyltransferase superfamily. ATCase family. Heterododecamer (2C3:3R2) of six catalytic PyrB chains organized as two trimers (C3), and six regulatory PyrI chains organized as three dimers (R2).

The enzyme catalyses carbamoyl phosphate + L-aspartate = N-carbamoyl-L-aspartate + phosphate + H(+). Its pathway is pyrimidine metabolism; UMP biosynthesis via de novo pathway; (S)-dihydroorotate from bicarbonate: step 2/3. Its function is as follows. Catalyzes the condensation of carbamoyl phosphate and aspartate to form carbamoyl aspartate and inorganic phosphate, the committed step in the de novo pyrimidine nucleotide biosynthesis pathway. The chain is Aspartate carbamoyltransferase catalytic subunit from Parafrankia sp. (strain EAN1pec).